Here is a 487-residue protein sequence, read N- to C-terminus: Lysine--tRNA ligase (487 aa).

E398 and E405 together coordinate Mg(2+).

This sequence belongs to the class-II aminoacyl-tRNA synthetase family. Homodimer. It depends on Mg(2+) as a cofactor.

The protein localises to the cytoplasm. It catalyses the reaction tRNA(Lys) + L-lysine + ATP = L-lysyl-tRNA(Lys) + AMP + diphosphate. In Mycoplasma mobile (strain ATCC 43663 / 163K / NCTC 11711) (Mesomycoplasma mobile), this protein is Lysine--tRNA ligase.